Reading from the N-terminus, the 238-residue chain is Probable transglycosylase SceD 1 (238 aa).

Positions M1–A27 are cleaved as a signal peptide. Residues T87–Q97 are compositionally biased toward polar residues. Positions T87–N161 are disordered. Residues E102–E156 show a composition bias toward low complexity.

This sequence belongs to the transglycosylase family. SceD subfamily.

The protein localises to the secreted. Is able to cleave peptidoglycan and affects clumping and separation of bacterial cells. In Staphylococcus saprophyticus subsp. saprophyticus (strain ATCC 15305 / DSM 20229 / NCIMB 8711 / NCTC 7292 / S-41), this protein is Probable transglycosylase SceD 1 (sceD1).